Here is a 628-residue protein sequence, read N- to C-terminus: Glutamyl-tRNA(Gln) amidotransferase subunit E (628 aa).

This sequence belongs to the GatB/GatE family. GatE subfamily. As to quaternary structure, heterodimer of GatD and GatE.

It carries out the reaction L-glutamyl-tRNA(Gln) + L-glutamine + ATP + H2O = L-glutaminyl-tRNA(Gln) + L-glutamate + ADP + phosphate + H(+). In terms of biological role, allows the formation of correctly charged Gln-tRNA(Gln) through the transamidation of misacylated Glu-tRNA(Gln) in organisms which lack glutaminyl-tRNA synthetase. The reaction takes place in the presence of glutamine and ATP through an activated gamma-phospho-Glu-tRNA(Gln). The GatDE system is specific for glutamate and does not act on aspartate. In Pyrococcus furiosus (strain ATCC 43587 / DSM 3638 / JCM 8422 / Vc1), this protein is Glutamyl-tRNA(Gln) amidotransferase subunit E.